Consider the following 175-residue polypeptide: ATP synthase subunit delta (175 aa).

The protein belongs to the ATPase delta chain family. As to quaternary structure, F-type ATPases have 2 components, F(1) - the catalytic core - and F(0) - the membrane proton channel. F(1) has five subunits: alpha(3), beta(3), gamma(1), delta(1), epsilon(1). F(0) has three main subunits: a(1), b(2) and c(10-14). The alpha and beta chains form an alternating ring which encloses part of the gamma chain. F(1) is attached to F(0) by a central stalk formed by the gamma and epsilon chains, while a peripheral stalk is formed by the delta and b chains.

It is found in the cell inner membrane. F(1)F(0) ATP synthase produces ATP from ADP in the presence of a proton or sodium gradient. F-type ATPases consist of two structural domains, F(1) containing the extramembraneous catalytic core and F(0) containing the membrane proton channel, linked together by a central stalk and a peripheral stalk. During catalysis, ATP synthesis in the catalytic domain of F(1) is coupled via a rotary mechanism of the central stalk subunits to proton translocation. Its function is as follows. This protein is part of the stalk that links CF(0) to CF(1). It either transmits conformational changes from CF(0) to CF(1) or is implicated in proton conduction. The sequence is that of ATP synthase subunit delta from Sulfurovum sp. (strain NBC37-1).